The chain runs to 453 residues: uncharacterized protein (453 aa).

Over Met1–Pro110 the chain is Cytoplasmic. The helical transmembrane segment at Ile111–Ile131 threads the bilayer. The Lumenal segment spans residues Val132–Lys172. The chain crosses the membrane as a helical span at residues Phe173–Ile193. At Gly194–Ala201 the chain is on the cytoplasmic side. Residues Val202–Val222 traverse the membrane as a helical segment. Residues Gly223–Asn234 lie on the Lumenal side of the membrane. A helical transmembrane segment spans residues Ser235 to Thr255. The Cytoplasmic segment spans residues His256–Ser269. The chain crosses the membrane as a helical span at residues Leu270–Ala290. Topologically, residues Lys291–Lys332 are lumenal. A helical membrane pass occupies residues Ile333–Thr353. Residues Gly354 to Val371 are Cytoplasmic-facing. Residues Ala372 to Ile392 form a helical membrane-spanning segment. Residues Gly393–Ser413 lie on the Lumenal side of the membrane. The helical transmembrane segment at Val414–Ile434 threads the bilayer. Residues Ala435–Ala453 lie on the Cytoplasmic side of the membrane.

Belongs to the TPT transporter family.

It localises to the membrane. In terms of biological role, able to suppress the functional loss of YPT1. May form a channel. Protein SLY41 is not essential for cell viability. The SLY41 gene is a multicopy suppressor. This is an uncharacterized protein from Saccharomyces cerevisiae (strain ATCC 204508 / S288c) (Baker's yeast).